The sequence spans 505 residues: ATP synthase subunit alpha, chloroplastic (505 aa).

170–177 provides a ligand contact to ATP; that stretch reads GDRQTGKT.

Belongs to the ATPase alpha/beta chains family. As to quaternary structure, F-type ATPases have 2 components, CF(1) - the catalytic core - and CF(0) - the membrane proton channel. CF(1) has five subunits: alpha(3), beta(3), gamma(1), delta(1), epsilon(1). CF(0) has four main subunits: a, b, b' and c.

The protein localises to the plastid. It is found in the chloroplast thylakoid membrane. It carries out the reaction ATP + H2O + 4 H(+)(in) = ADP + phosphate + 5 H(+)(out). Its function is as follows. Produces ATP from ADP in the presence of a proton gradient across the membrane. The alpha chain is a regulatory subunit. This chain is ATP synthase subunit alpha, chloroplastic, found in Oenothera elata subsp. hookeri (Hooker's evening primrose).